A 381-amino-acid chain; its full sequence is Putative F-box protein At3g17500 (381 aa).

The F-box domain occupies 1 to 45; the sequence is MMSNLPLDLVEEILSRVPATSLKRLRSTCKSWNNCYKDQRFTEKH.

In Arabidopsis thaliana (Mouse-ear cress), this protein is Putative F-box protein At3g17500.